The sequence spans 366 residues: UDP-N-acetylglucosamine--N-acetylmuramyl-(pentapeptide) pyrophosphoryl-undecaprenol N-acetylglucosamine transferase (366 aa).

UDP-N-acetyl-alpha-D-glucosamine contacts are provided by residues 10–12 (TGG), asparagine 124, arginine 166, serine 196, and glutamine 296.

This sequence belongs to the glycosyltransferase 28 family. MurG subfamily.

It is found in the cell membrane. It catalyses the reaction di-trans,octa-cis-undecaprenyl diphospho-N-acetyl-alpha-D-muramoyl-L-alanyl-D-glutamyl-meso-2,6-diaminopimeloyl-D-alanyl-D-alanine + UDP-N-acetyl-alpha-D-glucosamine = di-trans,octa-cis-undecaprenyl diphospho-[N-acetyl-alpha-D-glucosaminyl-(1-&gt;4)]-N-acetyl-alpha-D-muramoyl-L-alanyl-D-glutamyl-meso-2,6-diaminopimeloyl-D-alanyl-D-alanine + UDP + H(+). The protein operates within cell wall biogenesis; peptidoglycan biosynthesis. In terms of biological role, cell wall formation. Catalyzes the transfer of a GlcNAc subunit on undecaprenyl-pyrophosphoryl-MurNAc-pentapeptide (lipid intermediate I) to form undecaprenyl-pyrophosphoryl-MurNAc-(pentapeptide)GlcNAc (lipid intermediate II). The polypeptide is UDP-N-acetylglucosamine--N-acetylmuramyl-(pentapeptide) pyrophosphoryl-undecaprenol N-acetylglucosamine transferase (Alkaliphilus oremlandii (strain OhILAs) (Clostridium oremlandii (strain OhILAs))).